A 430-amino-acid chain; its full sequence is Dolichyl-diphosphooligosaccharide--protein glycosyltransferase subunit WBP1 (430 aa).

The N-terminal stretch at Met-1–Gly-20 is a signal peptide. Residues Ser-24–Trp-393 are Lumenal-facing. 2 N-linked (GlcNAc...) asparagine glycosylation sites follow: Asn-60 and Asn-332. The helical transmembrane segment at Val-394–Val-414 threads the bilayer. Over Thr-415–Asn-430 the chain is Cytoplasmic.

Belongs to the DDOST 48 kDa subunit family. In terms of assembly, component of the oligosaccharyltransferase (OST) complex, which appears to exist in two assemblies comprising OST1, OST2, OST4, OST5, STT3, SWP1, WPB1, and either OST3 or OST6. OST assembly occurs through the formation of 3 subcomplexes. Subcomplex 1 contains OST1 and OST5, subcomplex 2 contains STT3, OST3, and OST4, and subcomplex 3 contains OST2, WBP1, and SWP1. Interacts with SEC61, SBH1 and SSS1.

The protein resides in the endoplasmic reticulum membrane. It participates in protein modification; protein glycosylation. Subunit of the oligosaccharyl transferase (OST) complex that catalyzes the initial transfer of a defined glycan (Glc(3)Man(9)GlcNAc(2) in eukaryotes) from the lipid carrier dolichol-pyrophosphate to an asparagine residue within an Asn-X-Ser/Thr consensus motif in nascent polypeptide chains, the first step in protein N-glycosylation. N-glycosylation occurs cotranslationally and the complex associates with the Sec61 complex at the channel-forming translocon complex that mediates protein translocation across the endoplasmic reticulum (ER). All subunits are required for a maximal enzyme activity. This Saccharomyces cerevisiae (strain ATCC 204508 / S288c) (Baker's yeast) protein is Dolichyl-diphosphooligosaccharide--protein glycosyltransferase subunit WBP1 (WBP1).